The following is a 250-amino-acid chain: AA9 family lytic polysaccharide monooxygenase F (250 aa).

The signal sequence occupies residues 1 to 21; it reads MAMSKIATLAGLLASAGLVAG. H22 serves as a coordination point for Cu(2+). D51 contacts O2. 2 disulfides stabilise this stretch: C77/C200 and C121/C125. H107 is a binding site for Cu(2+). O2 is bound by residues H186 and Q195. Position 197 (Y197) interacts with Cu(2+).

It belongs to the glycosyl hydrolase 61 family. The cofactor is Cu(2+).

Its subcellular location is the secreted. The catalysed reaction is Endohydrolysis of (1-&gt;4)-beta-D-glucosidic linkages in cellulose, lichenin and cereal beta-D-glucans.. In terms of biological role, lytic polysaccharide monooxygenase (LMPO) that depolymerizes crystalline and amorphous polysaccharides via the oxidation of scissile alpha- or beta-(1-4)-glycosidic bonds, yielding C1 or C4 oxidation products. Catalysis by LPMOs requires the reduction of the active-site copper from Cu(II) to Cu(I) by a reducing agent and H(2)O(2) or O(2) as a cosubstrate. Major secreted component of the extracellular cellulolytic system. The protein is AA9 family lytic polysaccharide monooxygenase F of Emericella nidulans (strain FGSC A4 / ATCC 38163 / CBS 112.46 / NRRL 194 / M139) (Aspergillus nidulans).